The following is a 252-amino-acid chain: 2-succinyl-6-hydroxy-2,4-cyclohexadiene-1-carboxylate synthase (252 aa).

This sequence belongs to the AB hydrolase superfamily. MenH family. In terms of assembly, monomer.

It carries out the reaction 5-enolpyruvoyl-6-hydroxy-2-succinyl-cyclohex-3-ene-1-carboxylate = (1R,6R)-6-hydroxy-2-succinyl-cyclohexa-2,4-diene-1-carboxylate + pyruvate. It participates in quinol/quinone metabolism; 1,4-dihydroxy-2-naphthoate biosynthesis; 1,4-dihydroxy-2-naphthoate from chorismate: step 3/7. It functions in the pathway quinol/quinone metabolism; menaquinone biosynthesis. Catalyzes a proton abstraction reaction that results in 2,5-elimination of pyruvate from 2-succinyl-5-enolpyruvyl-6-hydroxy-3-cyclohexene-1-carboxylate (SEPHCHC) and the formation of 2-succinyl-6-hydroxy-2,4-cyclohexadiene-1-carboxylate (SHCHC). This chain is 2-succinyl-6-hydroxy-2,4-cyclohexadiene-1-carboxylate synthase, found in Salmonella enteritidis PT4 (strain P125109).